The sequence spans 118 residues: Aspartate 1-decarboxylase (118 aa).

Serine 25 serves as the catalytic Schiff-base intermediate with substrate; via pyruvic acid. Pyruvic acid (Ser) is present on serine 25. Position 57 (threonine 57) interacts with substrate. Tyrosine 58 serves as the catalytic Proton donor. 73–75 (GAA) is a substrate binding site.

This sequence belongs to the PanD family. Heterooctamer of four alpha and four beta subunits. Requires pyruvate as cofactor. Is synthesized initially as an inactive proenzyme, which is activated by self-cleavage at a specific serine bond to produce a beta-subunit with a hydroxyl group at its C-terminus and an alpha-subunit with a pyruvoyl group at its N-terminus.

It localises to the cytoplasm. It carries out the reaction L-aspartate + H(+) = beta-alanine + CO2. It functions in the pathway cofactor biosynthesis; (R)-pantothenate biosynthesis; beta-alanine from L-aspartate: step 1/1. Its function is as follows. Catalyzes the pyruvoyl-dependent decarboxylation of aspartate to produce beta-alanine. This is Aspartate 1-decarboxylase from Hyphomonas neptunium (strain ATCC 15444).